Consider the following 235-residue polypeptide: Exotoxin type C (235 aa).

Residues 1-27 (MKKINIIKIVFIITVILISTISPIIKS) form the signal peptide. 3 residues coordinate Zn(2+): H194, H228, and D230.

It belongs to the staphylococcal/streptococcal toxin family.

Its function is as follows. Superantigen that acts as a causative agent of the symptoms associated with scarlet fever. Has been associated with streptococcal toxic shock-like disease and may play a role in the early events of rheumatic fever. Superantigens cross-link major histocompatibility complex (MHC) class II and T-cell receptor (TCR) molecules, resulting in an overstimulation of T-cells associated with a massive release of pyrogenic and inflammatory cytokines. This chain is Exotoxin type C, found in Streptococcus pyogenes serotype M18 (strain MGAS8232).